We begin with the raw amino-acid sequence, 319 residues long: uncharacterized protein (319 aa).

The 143-residue stretch at 36-178 (IIEFLLSFKG…MTVIHEERGF (143 aa)) folds into the SIS domain. 51–56 (GIGKSG) contacts ATP. 2 consecutive CBS domains span residues 203–263 (MRSG…HLKT) and 268–319 (MTKN…MGVS).

The protein belongs to the SIS family. GutQ/KpsF subfamily.

This is an uncharacterized protein from Rickettsia prowazekii (strain Madrid E).